The following is a 304-amino-acid chain: D-alanine--D-alanine ligase (304 aa).

The ATP-grasp domain maps to 100-301; sequence KLVALQSGIP…FGEFLEDLIK (202 aa). 129–184 contributes to the ATP binding site; the sequence is ERKLGSPFIVKPCDVGSTIGLSLVRSASEYEVALEEAFRFSDRLLLEEFIDGFEVT. Residues Asp-256, Glu-268, and Asn-270 each coordinate Mg(2+).

It belongs to the D-alanine--D-alanine ligase family. The cofactor is Mg(2+). Mn(2+) is required as a cofactor.

It is found in the cytoplasm. The enzyme catalyses 2 D-alanine + ATP = D-alanyl-D-alanine + ADP + phosphate + H(+). It functions in the pathway cell wall biogenesis; peptidoglycan biosynthesis. Cell wall formation. This chain is D-alanine--D-alanine ligase, found in Coprothermobacter proteolyticus (strain ATCC 35245 / DSM 5265 / OCM 4 / BT).